A 484-amino-acid chain; its full sequence is Probable efflux pump outer membrane protein TtgC (484 aa).

Positions 1–17 (MTKSLLSLAVTAFILGG) are cleaved as a signal peptide. The N-palmitoyl cysteine moiety is linked to residue Cys-18. Cys-18 carries S-diacylglycerol cysteine lipidation.

Belongs to the outer membrane factor (OMF) (TC 1.B.17) family.

It is found in the cell outer membrane. Functionally, probable outer membrane component of the TtgABC efflux pump with unknown specificity. The chain is Probable efflux pump outer membrane protein TtgC (ttgC) from Pseudomonas putida (strain ATCC 47054 / DSM 6125 / CFBP 8728 / NCIMB 11950 / KT2440).